A 476-amino-acid chain; its full sequence is Glycogen synthase (476 aa).

ADP-alpha-D-glucose is bound at residue K15.

Belongs to the glycosyltransferase 1 family. Bacterial/plant glycogen synthase subfamily.

It catalyses the reaction [(1-&gt;4)-alpha-D-glucosyl](n) + ADP-alpha-D-glucose = [(1-&gt;4)-alpha-D-glucosyl](n+1) + ADP + H(+). Its pathway is glycan biosynthesis; glycogen biosynthesis. Synthesizes alpha-1,4-glucan chains using ADP-glucose. The chain is Glycogen synthase from Marinomonas sp. (strain MWYL1).